The sequence spans 365 residues: Phospho-N-acetylmuramoyl-pentapeptide-transferase (365 aa).

9 helical membrane passes run 19–39 (LLIL…WLLT), 47–67 (AVIL…FGVI), 91–111 (AGTP…VALI), 115–135 (FDPQ…IGWV), 155–175 (LLLQ…TGSP), 184–204 (GNLI…VLVA), 224–244 (AIAF…LMIF), 281–301 (AVGL…IFFV), and 344–364 (TQIV…GFIS).

The protein belongs to the glycosyltransferase 4 family. MraY subfamily. It depends on Mg(2+) as a cofactor.

It is found in the cell inner membrane. The enzyme catalyses UDP-N-acetyl-alpha-D-muramoyl-L-alanyl-gamma-D-glutamyl-meso-2,6-diaminopimeloyl-D-alanyl-D-alanine + di-trans,octa-cis-undecaprenyl phosphate = di-trans,octa-cis-undecaprenyl diphospho-N-acetyl-alpha-D-muramoyl-L-alanyl-D-glutamyl-meso-2,6-diaminopimeloyl-D-alanyl-D-alanine + UMP. The protein operates within cell wall biogenesis; peptidoglycan biosynthesis. In terms of biological role, catalyzes the initial step of the lipid cycle reactions in the biosynthesis of the cell wall peptidoglycan: transfers peptidoglycan precursor phospho-MurNAc-pentapeptide from UDP-MurNAc-pentapeptide onto the lipid carrier undecaprenyl phosphate, yielding undecaprenyl-pyrophosphoryl-MurNAc-pentapeptide, known as lipid I. In Gloeothece citriformis (strain PCC 7424) (Cyanothece sp. (strain PCC 7424)), this protein is Phospho-N-acetylmuramoyl-pentapeptide-transferase.